The chain runs to 483 residues: Lipoamide acyltransferase component of branched-chain alpha-keto acid dehydrogenase complex, mitochondrial (483 aa).

The transit peptide at 1–75 directs the protein to the mitochondrion; sequence MIARRIWRSH…AMATDSNSGL (75 aa). Residues 76–150 enclose the Lipoyl-binding domain; the sequence is IDVPLAQTGE…KVGETLVRLA (75 aa). K116 is modified (N6-lipoyllysine). Positions 183–220 constitute a Peripheral subunit-binding (PSBD) domain; it reads LSTPAVRNLAKDLGIDINVITGTGKDGRVLKEDVLRFS. Catalysis depends on residues H453 and D457.

This sequence belongs to the 2-oxoacid dehydrogenase family. As to quaternary structure, forms a 24-polypeptide structural core with octahedral symmetry. (R)-lipoate serves as cofactor. As to expression, expressed in the non-photosynthetic organs such as siliques, flowers and roots.

It is found in the mitochondrion matrix. It carries out the reaction N(6)-[(R)-dihydrolipoyl]-L-lysyl-[protein] + 2-methylpropanoyl-CoA = N(6)-[(R)-S(8)-2-methylpropanoyldihydrolipoyl]-L-lysyl-[protein] + CoA. The branched-chain alpha-keto dehydrogenase complex catalyzes the overall conversion of alpha-keto acids to acyl-CoA and CO(2). It contains multiple copies of three enzymatic components: branched-chain alpha-keto acid decarboxylase (E1), lipoamide acyltransferase (E2) and lipoamide dehydrogenase (E3). Within this complex, the catalytic function of this enzyme is to accept, and to transfer to coenzyme A, acyl groups that are generated by the branched-chain alpha-keto acid decarboxylase component. Required during sugar starvation and acts under the control of a sugar-sensing mechanism involving Ser/Thr kinases and phosphatases. In Arabidopsis thaliana (Mouse-ear cress), this protein is Lipoamide acyltransferase component of branched-chain alpha-keto acid dehydrogenase complex, mitochondrial (BCE2).